The following is a 204-amino-acid chain: Ribosome maturation factor RimM (204 aa).

A PRC barrel domain is found at 117 to 192; that stretch reads DEDEFFSADL…EVTIDPPDDL (76 aa).

It belongs to the RimM family. In terms of assembly, binds ribosomal protein uS19.

The protein resides in the cytoplasm. An accessory protein needed during the final step in the assembly of 30S ribosomal subunit, possibly for assembly of the head region. Essential for efficient processing of 16S rRNA. May be needed both before and after RbfA during the maturation of 16S rRNA. It has affinity for free ribosomal 30S subunits but not for 70S ribosomes. This Methylobacterium nodulans (strain LMG 21967 / CNCM I-2342 / ORS 2060) protein is Ribosome maturation factor RimM.